The following is a 46-amino-acid chain: EKGFGFISPADGSKDVFVHFSAIQSTSFKTLDEGQRVEFTIEQGQK.

In terms of domain architecture, CSD spans E1–K46.

Homodimer.

It localises to the cytoplasm. This is Major cold-shock protein (cspA) from Aeromonas salmonicida.